The following is a 50-amino-acid chain: Acidic phospholipase A2 1 (50 aa).

Positions 27, 29, and 31 each coordinate Ca(2+). Cysteine 28 and cysteine 44 form a disulfide bridge. Residue histidine 47 is part of the active site. Aspartate 48 is a Ca(2+) binding site.

It belongs to the phospholipase A2 family. Group II subfamily. D49 sub-subfamily. In terms of assembly, monomer. Ca(2+) is required as a cofactor. As to expression, expressed by the venom gland.

The protein resides in the secreted. The enzyme catalyses a 1,2-diacyl-sn-glycero-3-phosphocholine + H2O = a 1-acyl-sn-glycero-3-phosphocholine + a fatty acid + H(+). Snake venom phospholipase A2 (PLA2) that displays a potent enzymatic activity as measured by indirect hemolysis of red blood cells. Is neither lethal when injected into mice nor does it present anticoagulant activity. Displays a moderate inhibitory activity on the aggregation of platelets induced by low levels of ADP, thrombin and arachidonate. In contrast, strongly inhibits platelet aggregation induced by high doses of collagen. Shows myotoxic activity, increases the plasma creatine-kinase activity and induces edema and myonecrosis of mouse skeletal muscles. PLA2 catalyzes the calcium-dependent hydrolysis of the 2-acyl groups in 3-sn-phosphoglycerides. The protein is Acidic phospholipase A2 1 of Lachesis muta muta (Bushmaster).